A 653-amino-acid polypeptide reads, in one-letter code: 23S rRNA 5-hydroxycytidine C2501 synthase (653 aa).

It belongs to the peptidase U32 family. Interacts with precursors of the 50S ribosomal subunit.

Iron-sulfur clusters and prephenate are required for ho5C2501 formation. Functionally, responsible for the formation of the 5-hydroxycytidine modification at the C2501 position (ho5C2501) of 23S rRNA. May be a Fe-S protein that catalyzes ho5C2501 formation using prephenate as a hydroxyl group donor. In Escherichia coli (strain K12), this protein is 23S rRNA 5-hydroxycytidine C2501 synthase.